The following is a 185-amino-acid chain: Putative manganese efflux pump MntP (185 aa).

The next 6 helical transmembrane spans lie at 8–28 (LFVIAVALALDAFGVSLSIGL), 42–62 (ISFGFFQFMLAYIGSYLGVLF), 66–86 (ILVIPNIIGGIVIFVVGILML), 103–123 (MYFILGISVSIDAAIVGFTVL), 137–157 (IFIGIITSILCLIAFLISGYL), and 165–185 (KYANYIGGVILMLFGLEMIFM).

It belongs to the MntP (TC 9.B.29) family.

It localises to the cell membrane. Its function is as follows. Probably functions as a manganese efflux pump. This is Putative manganese efflux pump MntP from Clostridium novyi (strain NT).